The chain runs to 257 residues: Phosphonates import ATP-binding protein PhnC (257 aa).

Residues 2–246 (IEFRNVSKVY…KFAEIYGDVA (245 aa)) enclose the ABC transporter domain. Position 35-42 (35-42 (GLSGAGKS)) interacts with ATP.

The protein belongs to the ABC transporter superfamily. Phosphonates importer (TC 3.A.1.9.1) family. As to quaternary structure, the complex is composed of two ATP-binding proteins (PhnC), two transmembrane proteins (PhnE) and a solute-binding protein (PhnD).

It localises to the cell membrane. The enzyme catalyses phosphonate(out) + ATP + H2O = phosphonate(in) + ADP + phosphate + H(+). Its function is as follows. Part of the ABC transporter complex PhnCDE involved in phosphonates import. Responsible for energy coupling to the transport system. The protein is Phosphonates import ATP-binding protein PhnC of Bacillus thuringiensis subsp. konkukian (strain 97-27).